Here is a 456-residue protein sequence, read N- to C-terminus: Phospholipase A1 member A (456 aa).

An N-terminal signal peptide occupies residues 1-25 (MPPGPWESCFWVGGLLLWLSVGSSG). Serine 166 functions as the Nucleophile in the catalytic mechanism. Residue aspartate 190 is the Charge relay system of the active site. The cysteines at positions 245 and 258 are disulfide-linked. Histidine 260 serves as the catalytic Charge relay system. Intrachain disulfides connect cysteine 282-cysteine 293 and cysteine 296-cysteine 304. N-linked (GlcNAc...) asparagine glycosylation is present at asparagine 365.

It belongs to the AB hydrolase superfamily. Lipase family.

It is found in the secreted. The enzyme catalyses a 1,2-diacyl-sn-glycero-3-phospho-L-serine + H2O = a 2-acyl-sn-glycero-3-phospho-L-serine + a fatty acid + H(+). The catalysed reaction is 1,2-di-(9Z)-octadecenoyl-sn-glycero-3-phospho-L-serine + H2O = 2-(9Z-octadecenoyl)-sn-glycero-3-phospho-L-serine + (9Z)-octadecenoate + H(+). It catalyses the reaction 1-hexadecanoyl-2-(5Z,8Z,11Z,14Z-eicosatetraenoyl)-sn-glycero-3-phospho-L-serine + H2O = 2-(5Z,8Z,11Z,14Z)-eicosatetraenoyl-sn-glycero-3-phospho-L-serine + hexadecanoate + H(+). It carries out the reaction a 1-acyl-sn-glycero-3-phospho-L-serine + H2O = sn-glycero-3-phospho-L-serine + a fatty acid + H(+). The enzyme catalyses 1-(9Z-octadecenoyl)-sn-glycero-3-phospho-L-serine + H2O = sn-glycero-3-phospho-L-serine + (9Z)-octadecenoate + H(+). In terms of biological role, hydrolyzes the ester bond of the acyl group attached at the sn-1 position of phosphatidylserines (phospholipase A1 activity) and 1-acyl-2-lysophosphatidylserines (lysophospholipase activity) in the pathway of phosphatidylserines acyl chain remodeling. Cleaves phosphatidylserines exposed on the outer leaflet of the plasma membrane of apoptotic cells producing 2-acyl-1-lysophosphatidylserines, which in turn enhance mast cell activation and histamine production. Has no activity toward other glycerophospholipids including phosphatidylcholines, phosphatidylethanolamines, phosphatidic acids or phosphatidylinositols, or glycerolipids such as triolein. The polypeptide is Phospholipase A1 member A (PLA1A) (Pongo abelii (Sumatran orangutan)).